The primary structure comprises 582 residues: Leucine-rich repeat transmembrane neuronal protein 3 (582 aa).

Residues 1-30 form the signal peptide; that stretch reads MGFNVIRLLRGSAVAVVLAPTVLLTMLSSA. The region spanning 31–61 is the LRRNT domain; it reads ERGCPKGCRCEGKMVYCESQKLQEIPSSISA. Residues 31 to 420 lie on the Extracellular side of the membrane; sequence ERGCPKGCRC…VDTEHISFHK (390 aa). LRR repeat units lie at residues 63–83, 86–107, 110–131, 134–155, 158–179, 182–203, 206–226, 230–251, 254–275, and 279–300; these read CLGLSLRYNSLQKLKYNQFKG, QLTWLYLDHNHISNIDENAFNG, RLKELILSSNRISYFLNNTFRP, NLRNLDLSYNQLHSLGSEQFRG, KLLSLHLRSNSLRTIPVRIFQD, NLELLDLGYNRIRSLARNVFAG, RLKELHLEHNQFSKLNLALFP, SLQNLYMQWNKISVIGQTMSWT, SLQRLDLSGNEIEAFSGPSVFQ, and NLQRLNLDSNKLTFIGQEILDS. N-linked (GlcNAc...) asparagine glycosylation occurs at N126. Residues 312-363 form the LRRCT domain; that stretch reads NIWECSRNICSLVNWLRSFKGLRENTIICASPKELQGVNVIDAVKNYSICGK. Residue N357 is glycosylated (N-linked (GlcNAc...) asparagine). The disordered stretch occupies residues 378 to 410; that stretch reads KPTFKPKLPRPKHESKPPLPPTVGATEPSPETD. A helical membrane pass occupies residues 421-441; it reads IIAGSVALFLSVLVILLVMYV. At 442 to 582 the chain is on the cytoplasmic side; it reads SWKRYPASMK…RISDHKPQLA (141 aa).

The protein belongs to the LRRTM family. As to expression, expressed in neuronal tissues.

It is found in the cell membrane. The protein resides in the postsynaptic cell membrane. Functionally, may play a role in the development and maintenance of the vertebrate nervous system. Exhibits a limited synaptogenic activity in vitro, restricted to excitatory presynaptic differentiation. This is Leucine-rich repeat transmembrane neuronal protein 3 (Lrrtm3) from Mus musculus (Mouse).